Consider the following 130-residue polypeptide: Large ribosomal subunit protein bL19 (130 aa).

It belongs to the bacterial ribosomal protein bL19 family.

Functionally, this protein is located at the 30S-50S ribosomal subunit interface and may play a role in the structure and function of the aminoacyl-tRNA binding site. In Methylorubrum populi (strain ATCC BAA-705 / NCIMB 13946 / BJ001) (Methylobacterium populi), this protein is Large ribosomal subunit protein bL19.